Consider the following 1087-residue polypeptide: MKNNLSKFVSIFTAFIMIFGTSLFFPHVSAFADDNNANLVSNGDFESGTIDGWIKQGNPTLAATTEEAIGQYSMKVAGRTQTYEGPAYSFLGKMQKGQSYNVSLKVRLVSGQNSSNPLITVTMFREDDNGKHYDTIVWQKQVSEDSWTTVNGTYTLDYTGTLKTLYMYVESPDPTLEYYIDDVVVTPQNPIQVGEISNNQITIQNDIPDLSSVFKDYFPIGVAVDPSRLNDTDPHAQLTAKHFNMLVAENAMKPESLQPTEGNFTFDNADRIVDYAIAHNMKMRGHTLLWHNQVPDWFFQDPSDPTKPASRDLLLQRLKTHITTVLDHFKTKYGAQNPIIGWDVVNEVLDDNGSLRNSKWLQIIGPDYIEKAFEYAHEADPSMKLFINDYNIENNGVKTQAMYDLVKKLKSEGVPISGIGMQMHININSNIDNIKASIEKLASLGVEIQVTELDMNMNGNVSNEALLKQARLYKQLFDLFKAEKQYITAVVFWGVSDDVTWLSKPNAPLLFDSKLQAKPAYWAIADPSKAIPDIQSAKALEGSPTIGANVDSSWKLVKPLYANTYVEGTVGATATVKSMWDTKNLYLLVQVSDNTPSSNDGIEIFVDKNDNKSTSYETDDEHYTIKSDGTGSSDITKYVTSNADGYIVQLAIPIEDISPTLNDKIGLDVRLNDDKGSGSIDTVTVWNDYTNSQDTNTSYFGDIVLSKPAQVATAIYGTPVIDGKIDDIWNKVDAITTNTWVLGSDGATATAKMMWDDKYLYVLADVTDSNLNKSSVNPYEQDSVEVFVDQNNDKTSYYESDDGQYRVNYDNEQSFGGSTNSNGFKSATSLTQSGYIVEEAIPWTSITLLNGTIIGFDLQVNDADENGKRTGIVTWCDPSGNSWQDTSGFGNLLLTGKPSGVLKKSVTFNDIKDNWAKDVIEVLASRHIVEGMTDTQYEPSKTVTRAEFTAMILKLLNIKEEAYNGEFSDVKNGDWYANAIEAAYKAGIIEGDGKNMRPNDSITREEMTSIAMRAYEMLTSYKEENIGATSFNDDKSISDWAKNVVANAAKLGIINGEPSNVFAPKGIATRAEAAAIIYGLLEKSNNL.

The signal sequence occupies residues 1 to 30 (MKNNLSKFVSIFTAFIMIFGTSLFFPHVSA). Residues 37–188 (ANLVSNGDFE…YIDDVVVTPQ (152 aa)) enclose the CBM-cenC domain. Residues 204-527 (QNDIPDLSSV…KPAYWAIADP (324 aa)) enclose the GH10 domain. The Proton donor role is filled by E347. D389 is a catalytic residue. Catalysis depends on E452, which acts as the Nucleophile. SLH domains follow at residues 903 to 966 (KKSV…YNGE), 967 to 1025 (FSDV…KEEN), and 1028 to 1087 (ATSF…SNNL).

This sequence belongs to the glycosyl hydrolase 10 (cellulase F) family.

The catalysed reaction is Hydrolysis of (1-&gt;4)-beta-D-glucosidic linkages in cellulose and cellotetraose, releasing cellobiose from the non-reducing ends of the chains.. The sequence is that of Exoglucanase XynX (xynX) from Acetivibrio thermocellus (Hungateiclostridium thermocellum).